The chain runs to 62 residues: Large ribosomal subunit protein uL29 (62 aa).

The protein belongs to the universal ribosomal protein uL29 family.

The protein is Large ribosomal subunit protein uL29 of Syntrophotalea carbinolica (strain DSM 2380 / NBRC 103641 / GraBd1) (Pelobacter carbinolicus).